The primary structure comprises 461 residues: Putative aldehyde dehydrogenase FUS7 (461 aa).

220-225 (GSTATG) is a binding site for NAD(+). Catalysis depends on residues E242 and C276.

This sequence belongs to the aldehyde dehydrogenase family.

It catalyses the reaction an aldehyde + NAD(+) + H2O = a carboxylate + NADH + 2 H(+). Functionally, putative aldehyde dehydrogenase; part of the gene cluster that mediates the biosynthesis of the mycotoxin fusarin C. Within the cluster, FUS1, FUS2, FUS8 and FUS9 are sufficient for fusarin production. The other FUS cluster members are not essential for fusarin C biosynthesis. The chain is Putative aldehyde dehydrogenase FUS7 from Gibberella moniliformis (strain M3125 / FGSC 7600) (Maize ear and stalk rot fungus).